A 487-amino-acid chain; its full sequence is b(0,+)-type amino acid transporter 1 (487 aa).

The segment covering 1–20 (MEETSPRRRREDEKSVHSTE) has biased composition (basic and acidic residues). Residues 1-23 (MEETSPRRRREDEKSVHSTEPKT) are disordered. At 1-31 (MEETSPRRRREDEKSVHSTEPKTTSLQKEVG) the chain is on the cytoplasmic side. The residue at position 18 (Ser-18) is a Phosphoserine. Residues 32 to 55 (LLSGICIIVGTIIGSGIFISPKSV) traverse the membrane as a helical segment. Residue 43-47 (IIGSG) coordinates L-arginine. Over 56–62 (LANTESV) the chain is Extracellular. A helical membrane pass occupies residues 63–84 (GPCLIIWAACGVLATLGALCFA). The Cytoplasmic segment spans residues 85–110 (ELGTMITKSGGEYPYLMEAFGPIPAY). A helical membrane pass occupies residues 111–137 (LFSWTSLIVMKPSSFAIICLSFSEYVC). Over 138–147 (AAFYLGCRPP) the chain is Extracellular. Helical transmembrane passes span 148–169 (AVVV…NALS) and 170–193 (VRLG…IIII). At 194 to 217 (SGLVLLAQGNVKNFQNSFEGSQTS) the chain is on the extracellular side. The helical transmembrane segment at 218–238 (VGSISLAFYNGLWAYDGWNQL) threads the bilayer. Asp-233 serves as a coordination point for L-arginine. The Cytoplasmic segment spans residues 239 to 251 (NYITEELRNPYRN). Residues 252–274 (LPMAIVIGIPLVTVCYILMNIAY) form a helical membrane-spanning segment. The Extracellular portion of the chain corresponds to 275–302 (FTVMTPTELLQSQAVAVTFGDRVLYPAS). The chain crosses the membrane as a helical span at residues 303–325 (WVVPLFVAFSTIGAANGTCFTAG). The Cytoplasmic segment spans residues 326-351 (RLIYVAGREGHMLKVLSYISVKRLTP). 2 consecutive transmembrane segments (helical) span residues 352–370 (APAL…IPGD) and 371–391 (INSL…MTIL). Residues 392 to 410 (GLVVMRFTRKDLERPIKVP) are Cytoplasmic-facing. Residues 411 to 431 (IFIPIIVILVSVFLILAPIIS) traverse the membrane as a helical segment. Over 432–434 (SPA) the chain is Extracellular. Residues 435-450 (WEYLYCVLFILSGLIF) traverse the membrane as a helical segment. Residues 451-487 (YFLFVHYKFRWAQKISRPITKHLQMLMEVVPPEKDPE) lie on the Cytoplasmic side of the membrane.

The protein belongs to the amino acid-polyamine-organocation (APC) superfamily. In terms of assembly, disulfide-linked heterodimer composed of the catalytic light chain subunit SLC7A9 and the heavy chain subunit SLC3A1. The heterodimer is the minimal functional unit. Assembles in heterotetramers (dimers of heterodimers) and higher order oligomers; the oligomerization is mediated by SLC3A1 likely to prevent degradation and facilitate heteromer trafficking to the plasma membrane. Interacts with CAV1. In terms of tissue distribution, outer medulla of kidney (at protein level). Kidney and small intestine. In the kidney localized to the apical membrane of the proximal tubules.

It is found in the apical cell membrane. It carries out the reaction L-leucine(out) + L-arginine(in) = L-leucine(in) + L-arginine(out). The enzyme catalyses L-histidine(out) + L-arginine(in) = L-histidine(in) + L-arginine(out). The catalysed reaction is L-arginine(in) + L-phenylalanine(out) = L-arginine(out) + L-phenylalanine(in). It catalyses the reaction L-cysteine(out) + L-arginine(in) = L-cysteine(in) + L-arginine(out). It carries out the reaction L-cystine(out) + L-arginine(in) = L-cystine(in) + L-arginine(out). The enzyme catalyses L-lysine(out) + L-arginine(in) = L-lysine(in) + L-arginine(out). Its function is as follows. Associates with SLC3A1 to form a functional transporter complex that mediates the electrogenic exchange between cationic amino acids and neutral amino acids, with a stoichiometry of 1:1. Has system b(0,+)-like activity with high affinity for extracellular cationic amino acids and L-cystine and lower affinity for intracellular neutral amino acids. Substrate exchange is driven by high concentration of intracellular neutral amino acids and the intracellular reduction of L-cystine to L-cysteine. Required for reabsorption of L-cystine and dibasic amino acids across the brush border membrane in renal proximal tubules. The sequence is that of b(0,+)-type amino acid transporter 1 (Slc7a9) from Rattus norvegicus (Rat).